The following is a 369-amino-acid chain: Erythronate-4-phosphate dehydrogenase (369 aa).

2 residues coordinate substrate: Ser-45 and Thr-66. Asp-146 is an NAD(+) binding site. Residue Arg-209 is part of the active site. Asp-233 is a binding site for NAD(+). Glu-238 is a catalytic residue. His-255 (proton donor) is an active-site residue. Gly-258 contacts NAD(+).

The protein belongs to the D-isomer specific 2-hydroxyacid dehydrogenase family. PdxB subfamily. In terms of assembly, homodimer.

It is found in the cytoplasm. The enzyme catalyses 4-phospho-D-erythronate + NAD(+) = (R)-3-hydroxy-2-oxo-4-phosphooxybutanoate + NADH + H(+). The protein operates within cofactor biosynthesis; pyridoxine 5'-phosphate biosynthesis; pyridoxine 5'-phosphate from D-erythrose 4-phosphate: step 2/5. Functionally, catalyzes the oxidation of erythronate-4-phosphate to 3-hydroxy-2-oxo-4-phosphonooxybutanoate. In Porphyromonas gingivalis (strain ATCC BAA-308 / W83), this protein is Erythronate-4-phosphate dehydrogenase.